A 489-amino-acid chain; its full sequence is 6-phosphogluconate dehydrogenase, decarboxylating 1 (489 aa).

Residues 9–14 and 32–34 each bind NADP(+); these read GLAVMG and NRT. A Phosphoserine modification is found at S50. NADP(+) contacts are provided by residues 74–76 and N102; that span reads VKA. Substrate-binding positions include N102 and 128–130; that span reads SGG. Catalysis depends on K182, which acts as the Proton acceptor. 185–186 is a substrate binding site; the sequence is HN. The active-site Proton donor is E189. The substrate site is built by Y190, K259, R286, R446, and H452.

Belongs to the 6-phosphogluconate dehydrogenase family. In terms of assembly, homodimer.

The protein localises to the cytoplasm. The catalysed reaction is 6-phospho-D-gluconate + NADP(+) = D-ribulose 5-phosphate + CO2 + NADPH. It functions in the pathway carbohydrate degradation; pentose phosphate pathway; D-ribulose 5-phosphate from D-glucose 6-phosphate (oxidative stage): step 3/3. Catalyzes the oxidative decarboxylation of 6-phosphogluconate to ribulose 5-phosphate and CO(2), with concomitant reduction of NADP to NADPH. This chain is 6-phosphogluconate dehydrogenase, decarboxylating 1 (GND1), found in Saccharomyces cerevisiae (strain ATCC 204508 / S288c) (Baker's yeast).